The sequence spans 1167 residues: Carbamoyl phosphate synthase large chain (1167 aa).

A carboxyphosphate synthetic domain region spans residues 1–455 (MPRRTDIKSI…SLQKALRGLE (455 aa)). The ATP site is built by R129, R221, G227, G228, E260, V262, E267, G293, V294, H295, Q337, and E351. In terms of domain architecture, ATP-grasp 1 spans 184–380 (LETRWNLGEG…IAKIAAKLAV (197 aa)). Mg(2+) is bound by residues Q337, E351, and N353. Q337, E351, and N353 together coordinate Mn(2+). The interval 456 to 619 (TGLTGLDEIE…PFAGALANEA (164 aa)) is oligomerization domain. A carbamoyl phosphate synthetic domain region spans residues 620-1031 (QVSSRKKVVI…AFAKSQLGAG (412 aa)). The region spanning 748-960 (QKLLHKLGLS…IAKIAARIMA (213 aa)) is the ATP-grasp 2 domain. Positions 784, 844, 846, 851, 876, 877, 878, 879, 919, and 931 each coordinate ATP. Positions 919, 931, and 933 each coordinate Mg(2+). The Mn(2+) site is built by Q919, E931, and N933. One can recognise an MGS-like domain in the interval 1032–1167 (VDLPRSGTLF…EVRPLQEYFA (136 aa)). Positions 1032-1167 (VDLPRSGTLF…EVRPLQEYFA (136 aa)) are allosteric domain.

It belongs to the CarB family. As to quaternary structure, composed of two chains; the small (or glutamine) chain promotes the hydrolysis of glutamine to ammonia, which is used by the large (or ammonia) chain to synthesize carbamoyl phosphate. Tetramer of heterodimers (alpha,beta)4. The cofactor is Mg(2+). Requires Mn(2+) as cofactor.

The enzyme catalyses hydrogencarbonate + L-glutamine + 2 ATP + H2O = carbamoyl phosphate + L-glutamate + 2 ADP + phosphate + 2 H(+). It catalyses the reaction hydrogencarbonate + NH4(+) + 2 ATP = carbamoyl phosphate + 2 ADP + phosphate + 2 H(+). It functions in the pathway amino-acid biosynthesis; L-arginine biosynthesis; carbamoyl phosphate from bicarbonate: step 1/1. The protein operates within pyrimidine metabolism; UMP biosynthesis via de novo pathway; (S)-dihydroorotate from bicarbonate: step 1/3. Functionally, large subunit of the glutamine-dependent carbamoyl phosphate synthetase (CPSase). CPSase catalyzes the formation of carbamoyl phosphate from the ammonia moiety of glutamine, carbonate, and phosphate donated by ATP, constituting the first step of 2 biosynthetic pathways, one leading to arginine and/or urea and the other to pyrimidine nucleotides. The large subunit (synthetase) binds the substrates ammonia (free or transferred from glutamine from the small subunit), hydrogencarbonate and ATP and carries out an ATP-coupled ligase reaction, activating hydrogencarbonate by forming carboxy phosphate which reacts with ammonia to form carbamoyl phosphate. This Mesorhizobium japonicum (strain LMG 29417 / CECT 9101 / MAFF 303099) (Mesorhizobium loti (strain MAFF 303099)) protein is Carbamoyl phosphate synthase large chain.